A 704-amino-acid chain; its full sequence is Translin-associated factor X-interacting protein 1 (704 aa).

The disordered stretch occupies residues 1–37 (MANLQERKSFSKPRISIQASGGTPEAKGIEKRKLSQK). Coiled-coil stretches lie at residues 190-230 (EISV…AEEY) and 304-342 (RRDLEMQEKTNMELQEQLESLKADYEEVQKEHELLLQLH).

As to quaternary structure, interacts with TSNAX. In terms of tissue distribution, specifically expressed in testes. Predominantly detected in the post-meiotic stages of germ cells.

The protein localises to the cytoplasm. It is found in the perinuclear region. In terms of biological role, possible role in spermatogenesis. The protein is Translin-associated factor X-interacting protein 1 of Mus musculus (Mouse).